We begin with the raw amino-acid sequence, 958 residues long: Glycine dehydrogenase (decarboxylating) (958 aa).

Lys703 is subject to N6-(pyridoxal phosphate)lysine.

This sequence belongs to the GcvP family. In terms of assembly, the glycine cleavage system is composed of four proteins: P, T, L and H. Requires pyridoxal 5'-phosphate as cofactor.

It catalyses the reaction N(6)-[(R)-lipoyl]-L-lysyl-[glycine-cleavage complex H protein] + glycine + H(+) = N(6)-[(R)-S(8)-aminomethyldihydrolipoyl]-L-lysyl-[glycine-cleavage complex H protein] + CO2. Functionally, the glycine cleavage system catalyzes the degradation of glycine. The P protein binds the alpha-amino group of glycine through its pyridoxal phosphate cofactor; CO(2) is released and the remaining methylamine moiety is then transferred to the lipoamide cofactor of the H protein. The protein is Glycine dehydrogenase (decarboxylating) of Nitrobacter hamburgensis (strain DSM 10229 / NCIMB 13809 / X14).